The primary structure comprises 350 residues: Phosphotriesterase-related protein (350 aa).

A divalent metal cation-binding residues include His-22, His-24, Glu-169, His-201, His-230, and Asp-298.

This sequence belongs to the metallo-dependent hydrolases superfamily. Phosphotriesterase family. A divalent metal cation serves as cofactor.

The polypeptide is Phosphotriesterase-related protein (Drosophila grimshawi (Hawaiian fruit fly)).